Here is a 658-residue protein sequence, read N- to C-terminus: DNA ligase (658 aa).

NAD(+) contacts are provided by residues 31–35, 80–81, and Glu-110; these read DFEYD and SL. Lys-112 acts as the N6-AMP-lysine intermediate in catalysis. Residues Arg-133, Glu-167, Lys-279, and Lys-303 each contribute to the NAD(+) site. Residues Cys-397, Cys-400, Cys-415, and Cys-420 each contribute to the Zn(2+) site. A BRCT domain is found at 584-654; that stretch reads DTASIYFQKS…KALNIPIINE (71 aa).

Belongs to the NAD-dependent DNA ligase family. LigA subfamily. The cofactor is Mg(2+). Mn(2+) is required as a cofactor.

The enzyme catalyses NAD(+) + (deoxyribonucleotide)n-3'-hydroxyl + 5'-phospho-(deoxyribonucleotide)m = (deoxyribonucleotide)n+m + AMP + beta-nicotinamide D-nucleotide.. In terms of biological role, DNA ligase that catalyzes the formation of phosphodiester linkages between 5'-phosphoryl and 3'-hydroxyl groups in double-stranded DNA using NAD as a coenzyme and as the energy source for the reaction. It is essential for DNA replication and repair of damaged DNA. The chain is DNA ligase from Mycoplasma pneumoniae (strain ATCC 29342 / M129 / Subtype 1) (Mycoplasmoides pneumoniae).